Consider the following 461-residue polypeptide: Mycosin-3 (461 aa).

A signal peptide spans 1–25 (MIRAAFACLAATVVVAGWWTPPAWA). The Peptidase S8 domain occupies 64–397 (DPGVPTPSQT…AGNLDAVAAL (334 aa)). Active-site charge relay system residues include Asp95, His126, and Ser342. The chain crosses the membrane as a helical span at residues 432-452 (AFAGAAALSVLVGLTAATVAI).

This sequence belongs to the peptidase S8 family.

The protein localises to the cell membrane. The protein is Mycosin-3 of Mycobacterium tuberculosis (strain ATCC 25618 / H37Rv).